The following is a 150-amino-acid chain: Large ribosomal subunit protein uL15 (150 aa).

Residues 1–52 (MDLSNLKPAEGSVRKNSKRIGRGEGSGKGGTATRGHKGAKSRSGYSKKIGFE) form a disordered region. Over residues 23-32 (GEGSGKGGTA) the composition is skewed to gly residues.

Belongs to the universal ribosomal protein uL15 family. As to quaternary structure, part of the 50S ribosomal subunit.

Its function is as follows. Binds to the 23S rRNA. The protein is Large ribosomal subunit protein uL15 of Christiangramia forsetii (strain DSM 17595 / CGMCC 1.15422 / KT0803) (Gramella forsetii).